We begin with the raw amino-acid sequence, 273 residues long: Undecaprenyl-diphosphatase (273 aa).

The next 7 helical transmembrane spans lie at serine 6 to serine 26, alanine 45 to tryptophan 65, leucine 90 to histidine 110, leucine 116 to alanine 136, tyrosine 190 to leucine 210, glycine 222 to isoleucine 242, and isoleucine 252 to phenylalanine 272.

The protein belongs to the UppP family.

It localises to the cell inner membrane. It catalyses the reaction di-trans,octa-cis-undecaprenyl diphosphate + H2O = di-trans,octa-cis-undecaprenyl phosphate + phosphate + H(+). In terms of biological role, catalyzes the dephosphorylation of undecaprenyl diphosphate (UPP). Confers resistance to bacitracin. In Shigella sonnei (strain Ss046), this protein is Undecaprenyl-diphosphatase.